A 576-amino-acid chain; its full sequence is MSQDNATAPTSNFLRQIIDADLAQGTYADRKDATGQPIPPVVTRFPPEPNGYLHIGHAKSIWVNFGMARDYNGRCHLRFDDTNPVKEDTEYVDSIIDAVHWLGYSWSDAGGEHLYYASDYFEQLYGFAEVLIQRGVAYVDSQSAEQIAANRGDFTRPGTLSPFRDRSVDENLALFRDMRAGKYKDGEHVLRAKIDMAAPNIVMRDPVLYRIRHAHHHRTGDAWCIYPMYDFTHCISDALENITHSLCTLEFENNRPLYDWVLDHLRDAGVLAAPLPHQYEFARLHLTYAITSKRKLLQLVTEKRVDGWDDPRMPTLVGIRRRGYTPESIQLFCERVGVSKADSWIDMSILEGAVRDDLDARAPRSVAVLDPVKLVLDNVPADFNEPCSAPVHPKQPELGRREFPLTRELWIEREDFTETPPKGYFRLFPGNKVRLRYGYVIECTGCDKDAAGNITAVHANIIPDTKSGTPGADSVKVKGNIHWVSAAHALEAEVRLYDRLFSDPQPDSGDKNFLDALNPNSKKIVKAFLEPTLATAKAEDRFQFERHGYFVADRIDSQPGKPVFNRVVGLKDSWGK.

The short motif at P47–H57 is the 'HIGH' region element. ATP contacts are provided by residues E48–N50 and H54–S60. L-glutamine contacts are provided by D80 and Y229. Residues T248 and R283 to L284 each bind ATP. Residues I290 to R294 carry the 'KMSKS' region motif.

This sequence belongs to the class-I aminoacyl-tRNA synthetase family. As to quaternary structure, monomer.

The protein localises to the cytoplasm. The catalysed reaction is tRNA(Gln) + L-glutamine + ATP = L-glutaminyl-tRNA(Gln) + AMP + diphosphate. The polypeptide is Glutamine--tRNA ligase (Ralstonia pickettii (strain 12J)).